A 71-amino-acid chain; its full sequence is Small ribosomal subunit protein bS18c (71 aa).

Belongs to the bacterial ribosomal protein bS18 family. As to quaternary structure, part of the 30S ribosomal subunit.

Its subcellular location is the plastid. The protein resides in the cyanelle. The protein is Small ribosomal subunit protein bS18c (rps18) of Cyanophora paradoxa.